The following is a 310-amino-acid chain: MKKCRFLVLLLLAFVGLAACSSQKSSTDSSSSKLNVVATNSIIADITKNIAGDKINLHSIVPVGQDPHKYEPLPEDVKKTSKADLIFYNGINLETGGNAWFTKLVENAQKKENKDYYAVSEGVDVIYLEGQNEKGKEDPHAWLNLENGIIYAQNIAKRLIEKDPDNKATYEKNLKAYIEKLTALDKEAKEKFNNIPEEKKMIVTSEGCPKYFSKAYNVPSAYIWEINTEEEGTPDQIKSLVEKLRKTKVPSLFVESSVDDRPMKTVSKDTNIPIYAKIFTDSIAEKGEDGDSYYSMMKYNLDKISEGLAK.

An N-terminal signal peptide occupies residues M1–A19. A lipid anchor (N-palmitoyl cysteine) is attached at C20. C20 carries the S-diacylglycerol cysteine lipid modification. Residues H68, H140, E206, and D281 each coordinate Mn(2+).

This sequence belongs to the bacterial solute-binding protein 9 family. Lipoprotein receptor antigen (Lrai) subfamily. As to quaternary structure, the complex is composed of two ATP-binding proteins (ScaC), two transmembrane proteins (ScaB) and a solute-binding protein (ScaA).

The protein resides in the cell membrane. In terms of biological role, part of ATP-binding cassette (ABC) transport system ScaABC involved in manganese import. Essential for growth under Mn(2+)-limiting conditions. Also acts as an adhesin which is involved on adherence to extracellular matrix. It is an important factor in pathogenesis and infection. This chain is Manganese ABC transporter substrate-binding lipoprotein scaA, found in Streptococcus gordonii.